Reading from the N-terminus, the 155-residue chain is Cytochrome c-type biogenesis protein CcmE (155 aa).

The Cytoplasmic segment spans residues 1–8 (MHPKRKQR). The helical; Signal-anchor for type II membrane protein transmembrane segment at 9-29 (LILVLFVVLVSSVGVSLTLYA) threads the bilayer. Over 30–155 (LNENINLFYP…KTCKGISYDS (126 aa)) the chain is Periplasmic. Residues H124 and Y128 each coordinate heme.

This sequence belongs to the CcmE/CycJ family.

It localises to the cell inner membrane. In terms of biological role, heme chaperone required for the biogenesis of c-type cytochromes. Transiently binds heme delivered by CcmC and transfers the heme to apo-cytochromes in a process facilitated by CcmF and CcmH. The sequence is that of Cytochrome c-type biogenesis protein CcmE from Teredinibacter turnerae (strain ATCC 39867 / T7901).